The chain runs to 132 residues: Ribonuclease VapC (132 aa).

In terms of domain architecture, PINc spans 4–123 (YMLDTNIVIY…SNNLREFERV (120 aa)). Mg(2+)-binding residues include aspartate 7 and aspartate 98.

The protein belongs to the PINc/VapC protein family. In terms of assembly, probably forms a complex with cognate antitoxin VapB2. It depends on Mg(2+) as a cofactor.

Its function is as follows. Toxic component of a type II toxin-antitoxin (TA) system. Acts as an RNase. Its toxic effect is neutralized by cognate antitoxin VapB2 but not by non-cognate antitoxin VapB1. The sequence is that of Ribonuclease VapC from Haemophilus influenzae (strain 86-028NP).